Consider the following 287-residue polypeptide: Protein REVEILLE 3 (287 aa).

The HTH myb-type domain occupies 56–110 (TITKSRENWTEQEHDKFLEALHLFDRDWKKIKAFVGSKTVIQIRSHAQKYFLKVQ). Positions 83–106 (WKKIKAFVGSKTVIQIRSHAQKYF) form a DNA-binding region, H-T-H motif. The disordered stretch occupies residues 111 to 135 (KNGTKEHLPPPRPKRKANHPYPQKA).

It localises to the nucleus. In terms of biological role, probable transcription factor. This Arabidopsis thaliana (Mouse-ear cress) protein is Protein REVEILLE 3 (RVE3).